The following is a 235-amino-acid chain: Large ribosomal subunit protein uL1 (235 aa).

It belongs to the universal ribosomal protein uL1 family. As to quaternary structure, part of the 50S ribosomal subunit.

Functionally, binds directly to 23S rRNA. The L1 stalk is quite mobile in the ribosome, and is involved in E site tRNA release. Its function is as follows. Protein L1 is also a translational repressor protein, it controls the translation of the L11 operon by binding to its mRNA. This is Large ribosomal subunit protein uL1 from Nitratidesulfovibrio vulgaris (strain ATCC 29579 / DSM 644 / CCUG 34227 / NCIMB 8303 / VKM B-1760 / Hildenborough) (Desulfovibrio vulgaris).